We begin with the raw amino-acid sequence, 382 residues long: Alanine racemase (382 aa).

Lys39 acts as the Proton acceptor; specific for D-alanine in catalysis. Residue Lys39 is modified to N6-(pyridoxal phosphate)lysine. Residue Arg138 participates in substrate binding. Residue Tyr265 is the Proton acceptor; specific for L-alanine of the active site. Met312 lines the substrate pocket.

This sequence belongs to the alanine racemase family. Pyridoxal 5'-phosphate serves as cofactor.

The catalysed reaction is L-alanine = D-alanine. It participates in amino-acid biosynthesis; D-alanine biosynthesis; D-alanine from L-alanine: step 1/1. Its function is as follows. Catalyzes the interconversion of L-alanine and D-alanine. May also act on other amino acids. The polypeptide is Alanine racemase (alr) (Staphylococcus epidermidis (strain ATCC 35984 / DSM 28319 / BCRC 17069 / CCUG 31568 / BM 3577 / RP62A)).